The chain runs to 904 residues: Toll-like receptor 3 (904 aa).

Residues 1–23 form the signal peptide; the sequence is MRQTLPCIYFWGGLLPFGMLCAS. An LRRNT domain is found at 24–51; that stretch reads STTKCTVSHEVADCSHLKLTQVPDDLPT. Over 24 to 704 the chain is Lumenal; it reads STTKCTVSHE…SCKDSAPFEL (681 aa). Cysteine 28 and cysteine 37 are joined by a disulfide. N-linked (GlcNAc...) asparagine glycosylation is found at asparagine 52, asparagine 57, and asparagine 70. LRR repeat units follow at residues 52–73, 76–97, 100–121, 124–145, 148–168, and 172–193; these read NITV…NFTR, QLTS…LCQK, MLKV…TFAF, NLTE…PFVK, NLIT…GTQV, and NLQE…ELDI. A disulfide bond links cysteine 95 and cysteine 122. Asparagine 124 is a glycosylation site (N-linked (GlcNAc...) asparagine). N-linked (GlcNAc...) asparagine glycosylation is present at asparagine 196. LRR repeat units lie at residues 198-219 and 222-244; these read SLKK…CFHA and RLFG…LCLE. N-linked (GlcNAc...) asparagine glycosylation is found at asparagine 247, asparagine 252, asparagine 265, asparagine 275, and asparagine 291. LRR repeat units lie at residues 249–270, 275–296, 299–320, 323–344, 356–377, 380–400, 408–429, 432–454, 465–486, 507–528, 531–552, 563–584, 587–608, and 611–632; these read SIRN…TFLG, NLTM…SFAW, QLEY…SLHG, NVRY…ASLP, CLEH…MFTG, NLKY…TNET, PLHI…AFSW, HLEV…EWRG, YNKY…QRLM, NLTI…MLEG, KLEI…ANPG, HLHI…VFKD, ELKI…VFNN, and SLKS…VFGP. N-linked (GlcNAc...) asparagine glycosylation is found at asparagine 398 and asparagine 413. An N-linked (GlcNAc...) asparagine glycan is attached at asparagine 507. N-linked (GlcNAc...) asparagine glycans are attached at residues asparagine 636 and asparagine 662. The LRRCT domain occupies 645–698; that stretch reads NPFDCTCESIAWFVNWINETHTNIPELSSHYLCNTPPHYHGFPVRLFDTSSCKD. Intrachain disulfides connect cysteine 649–cysteine 677 and cysteine 651–cysteine 696. The helical transmembrane segment at 705–725 threads the bilayer; the sequence is FFMINTSILLIFIFIVLLIHF. At 726–904 the chain is on the cytoplasmic side; the sequence is EGWRISFYWN…VALGSKNSVH (179 aa). In terms of domain architecture, TIR spans 754–897; it reads FEYAAYIIHA…AFRHKLQVAL (144 aa). Tyrosine 759 bears the Phosphotyrosine mark. Glycyl lysine isopeptide (Lys-Gly) (interchain with G-Cter in ubiquitin) cross-links involve residues lysine 765, lysine 812, and lysine 831. Phosphotyrosine is present on tyrosine 858.

The protein belongs to the Toll-like receptor family. Monomer and homodimer; dimerization is triggered by ligand-binding, the signaling unit is composed of one ds-RNA of around 40 bp and two TLR3 molecules, and lateral clustering of signaling units along the length of the ds-RNA ligand is required for TLR3 signal transduction. Interacts (via transmembrane domain) with UNC93B1; the interaction is required for transport from the ER to the endosomes. Interacts with SRC; upon binding of double-stranded RNA. Interacts with TICAM1 (via the TIR domain) in response to poly(I:C) and this interaction is enhanced in the presence of WDFY1. The tyrosine-phosphorylated form (via TIR domain) interacts with WDFY1 (via WD repeat 2) in response to poly(I:C). Post-translationally, heavily N-glycosylated, except on that part of the surface of the ectodomain that is involved in ligand binding. TLR3 signaling requires a proteolytic cleavage mediated by cathepsins CTSB and CTSH, the cleavage occurs between amino acids 252 and 346. The cleaved form of TLR3 is the predominant form found in endosomes. In terms of processing, ubiquitinated by TRIM3; leading to recognition and sorting of polyubiquitinated TLR3 by the ESCRT complexes. Ubiquitinated by ZNRF1 via 'Lys-63'-linked ubiquitin chains; leading to TLR3 lysosomal trafficking and degradation. Ubiquitinated by RNF170 at Lys-765 via 'Lys-48'-linked ubiquitin chains; leading to TLR3 proteasomal degradation. As to expression, expressed at high level in placenta and pancreas. Also detected in CD11c+ immature dendritic cells. Only expressed in dendritic cells and not in other leukocytes, including monocyte precursors. TLR3 is the TLR that is expressed most strongly in the brain, especially in astrocytes, glia, and neurons.

The protein localises to the endoplasmic reticulum membrane. It localises to the endosome membrane. The protein resides in the early endosome. Functionally, key component of innate and adaptive immunity. TLRs (Toll-like receptors) control host immune response against pathogens through recognition of molecular patterns specific to microorganisms. TLR3 is a nucleotide-sensing TLR which is activated by double-stranded RNA, a sign of viral infection. Acts via the adapter TRIF/TICAM1, leading to NF-kappa-B activation, IRF3 nuclear translocation, cytokine secretion and the inflammatory response. This Homo sapiens (Human) protein is Toll-like receptor 3.